A 299-amino-acid chain; its full sequence is ATP phosphoribosyltransferase (299 aa).

It belongs to the ATP phosphoribosyltransferase family. Long subfamily. In terms of assembly, equilibrium between an active dimeric form, an inactive hexameric form and higher aggregates. Interconversion between the various forms is largely reversible and is influenced by the natural substrates and inhibitors of the enzyme. The cofactor is Mg(2+).

Its subcellular location is the cytoplasm. It catalyses the reaction 1-(5-phospho-beta-D-ribosyl)-ATP + diphosphate = 5-phospho-alpha-D-ribose 1-diphosphate + ATP. The protein operates within amino-acid biosynthesis; L-histidine biosynthesis; L-histidine from 5-phospho-alpha-D-ribose 1-diphosphate: step 1/9. With respect to regulation, feedback inhibited by histidine. Catalyzes the condensation of ATP and 5-phosphoribose 1-diphosphate to form N'-(5'-phosphoribosyl)-ATP (PR-ATP). Has a crucial role in the pathway because the rate of histidine biosynthesis seems to be controlled primarily by regulation of HisG enzymatic activity. The sequence is that of ATP phosphoribosyltransferase from Erwinia tasmaniensis (strain DSM 17950 / CFBP 7177 / CIP 109463 / NCPPB 4357 / Et1/99).